A 119-amino-acid chain; its full sequence is Auxin-responsive protein SAUR78 (119 aa).

The protein belongs to the ARG7 family.

Functionally, may be involved in the regulation of ethylene receptor signaling. Promotes cell expansion and plant growth. In Arabidopsis thaliana (Mouse-ear cress), this protein is Auxin-responsive protein SAUR78.